Reading from the N-terminus, the 658-residue chain is MTQLAIGEATPHGATYDGHGVNFTLFSAHAERVELCVFDSRGNERRYDLPGRRGDVWHGYLAGARPGLRYGYRVHGPWQPAQGHRFNPAKLLLDPYARRVEGELKDHPLLHGGHDEPDYRDNAAVAPKSVVISDHYDWEDDAAPRTPWGKTVIYEAHVKGLTYLHPELPQEIRGTYKALGHPVMVAYFKQLGITALELLPVAQFASEPRLQRMGLTNYWGYNPMAMFALHSAWASSPEMALDEFRDAVKALHRAGIEVILDIVLNHSAELDLDGPTFSLRGIDNRSYYWIRDDGDYHNWTGCGNTLNLSHPGVVEYACECLRYWVETCHVDGFRFDLASVMGRTPTFRQDAPLFAAIKACPVLSTVKLIAEPWDIGEGGYQVGNFPPPFAEWNDHFRDAARRFWLPRNLTTGEFACRFAASSDVFKRNGRAPGASVNLLTAHDGFTLRDCVCFNQKHNEANGEENRDGTNSNYSDNHGKEGLGGPLDLMERRRDSIHALLATLLLSQGTPMLLAGDEHGHSQHGNNNAYCQDNALTWLDWQQANRGLTTFTAALIRLRQQIPALTGNSWWEEGDGNVRWLNKNAQPLSADEWQNGPKLMQILLSDRFLIAINATLEVTDIVLPEGEWRAVPPFAGEDNPVITAVWQGPAHGLCVFQRG.

The Nucleophile role is filled by Asp-336. Glu-371 acts as the Proton donor in catalysis. Residues 459–484 are disordered; sequence EANGEENRDGTNSNYSDNHGKEGLGG.

This sequence belongs to the glycosyl hydrolase 13 family.

It carries out the reaction Hydrolysis of (1-&gt;6)-alpha-D-glucosidic linkages to branches with degrees of polymerization of three or four glucose residues in limit dextrin.. It participates in glycan degradation; glycogen degradation. In terms of biological role, removes maltotriose and maltotetraose chains that are attached by 1,6-alpha-linkage to the limit dextrin main chain, generating a debranched limit dextrin. This is Glycogen debranching enzyme from Salmonella paratyphi B (strain ATCC BAA-1250 / SPB7).